Here is a 235-residue protein sequence, read N- to C-terminus: 15,16-dihydrobiliverdin:ferredoxin oxidoreductase (235 aa).

Belongs to the HY2 family.

It carries out the reaction 15,16-dihydrobiliverdin + oxidized 2[4Fe-4S]-[ferredoxin] = biliverdin IXalpha + reduced 2[4Fe-4S]-[ferredoxin] + 2 H(+). Catalyzes the two-electron reduction of biliverdin IX-alpha at the C15 methine bridge. This is 15,16-dihydrobiliverdin:ferredoxin oxidoreductase from Synechococcus sp. (strain CC9605).